We begin with the raw amino-acid sequence, 290 residues long: Xyloglucan endotransglucosylase/hydrolase protein 9 (290 aa).

The signal sequence occupies residues 1–26 (MVGMDLFKCVMMIMVLVVSCGEAVSG). The GH16 domain occupies 27-215 (AKFDELYRSS…WSHAPFVASY (189 aa)). The N-linked (GlcNAc...) asparagine glycan is linked to Asn-55. Glu-101 functions as the Nucleophile in the catalytic mechanism. The active-site Proton donor is the Glu-105. Glu-105 lines the xyloglucan pocket. N-linked (GlcNAc...) asparagine glycosylation occurs at Asn-109. Xyloglucan contacts are provided by residues 118–120 (QTN), 128–130 (NRE), 194–195 (DW), and Gly-199. Intrachain disulfides connect Cys-223–Cys-234 and Cys-271–Cys-284. Xyloglucan is bound at residue Arg-276.

It belongs to the glycosyl hydrolase 16 family. XTH group 1 subfamily. Contains at least one intrachain disulfide bond essential for its enzymatic activity. Highly expressed in shoot apices. In the vegetative and reproductive phases, it accumulates in the shoot apex region, where cell division is most active. In the reproductive phase, it is also expressed in flower buds, flower stalks and internodes bearing flowers.

Its subcellular location is the secreted. The protein localises to the cell wall. It is found in the extracellular space. It localises to the apoplast. It catalyses the reaction breaks a beta-(1-&gt;4) bond in the backbone of a xyloglucan and transfers the xyloglucanyl segment on to O-4 of the non-reducing terminal glucose residue of an acceptor, which can be a xyloglucan or an oligosaccharide of xyloglucan.. In terms of biological role, catalyzes xyloglucan endohydrolysis (XEH) and/or endotransglycosylation (XET). Cleaves and religates xyloglucan polymers, an essential constituent of the primary cell wall, and thereby participates in cell wall construction of growing tissues. Involved in internodal cell elongation. The chain is Xyloglucan endotransglucosylase/hydrolase protein 9 (XTH9) from Arabidopsis thaliana (Mouse-ear cress).